The chain runs to 532 residues: Intercellular adhesion molecule 1 (532 aa).

Residues 1–27 form the signal peptide; sequence MAPSSPRPALPALLVLLGALFPGPGNA. Residues 28 to 480 lie on the Extracellular side of the membrane; that stretch reads QTSVSPPKVI…TVNVLSPRYE (453 aa). Ig-like C2-type domains are found at residues 41 to 103 and 128 to 193; these read GGSV…QSTA and GKDL…LDLR. Cystine bridges form between C48–C92, C52–C96, and C135–C186. An N-linked (GlcNAc...) asparagine glycan is attached at N145. The short motif at 152-154 is the Cell attachment site; atypical element; the sequence is RGE. Residues N183, N202, N267, and N296 are each glycosylated (N-linked (GlcNAc...) asparagine). 2 Ig-like C2-type domains span residues 230-297 and 325-378; these read DTQG…LGNQ and GTEV…LEVA. A disulfide bridge links C237 with C290. A disulfide bridge connects residues C332 and C371. Residues N385 and N406 are each glycosylated (N-linked (GlcNAc...) asparagine). Disulfide bonds link C403-C419, C419-C457, and C431-C457. The region spanning 412–464 is the Ig-like C2-type 5 domain; the sequence is NSQQTPMCQASGNPLPELKCLKDGTFPLPVGESVTVTRDLEGTYLCRARSTQG. The helical transmembrane segment at 481-503 threads the bilayer; the sequence is IVIITVVAAAVIMGTAGLSTYLY. The Cytoplasmic segment spans residues 504-532; sequence NRQRKIRKYRLQQAQKGTPMKPNTQATPP. 2 positions are modified to phosphothreonine: T521 and T530.

The protein belongs to the immunoglobulin superfamily. ICAM family. Homodimer. Interacts with MUC1 and promotes cell aggregation in epithelial cells. Interacts with ARHGEF26/SGEF. Interacts (on T cell side) with CD81, CD247 and CD9 at immunological synapses between antigen-presenting cells and T cells. Monoubiquitinated, which is promoted by MARCH9 and leads to endocytosis.

The protein resides in the membrane. Functionally, ICAM proteins are ligands for the leukocyte adhesion protein LFA-1 (integrin alpha-L/beta-2). During leukocyte trans-endothelial migration, ICAM1 engagement promotes the assembly of endothelial apical cups through ARHGEF26/SGEF and RHOG activation. This Pan paniscus (Pygmy chimpanzee) protein is Intercellular adhesion molecule 1 (ICAM1).